The following is a 932-amino-acid chain: DNA mismatch repair protein MutS (932 aa).

ATP is bound at residue 615–622 (GPNMAGKS).

It belongs to the DNA mismatch repair MutS family.

Its function is as follows. This protein is involved in the repair of mismatches in DNA. It is possible that it carries out the mismatch recognition step. This protein has a weak ATPase activity. This Clostridium botulinum (strain Loch Maree / Type A3) protein is DNA mismatch repair protein MutS.